The primary structure comprises 515 residues: C-glycoside 3-oxidase (515 aa).

Residue Glu-41 coordinates FAD. Over residues 62 to 82 (ERAHAQRRSEGPHAREDDDRV) the composition is skewed to basic and acidic residues. Residues 62 to 90 (ERAHAQRRSEGPHAREDDDRVGGIVKSAQ) are disordered. FAD-binding residues include Ser-118, Asn-120, Met-124, Thr-129, Ala-131, and Val-237. His-444 functions as the Proton acceptor in the catalytic mechanism. The FAD site is built by Asn-478 and Thr-490.

The protein belongs to the GMC oxidoreductase family. In terms of assembly, monomer. FAD is required as a cofactor.

It catalyses the reaction isoorientin + O2 = 3''-dehydroisoorientin + H2O2. The catalysed reaction is mangiferin + O2 = 3'-dehydromangiferin + H2O2. Its function is as follows. FAD-dependent C-glycoside-metabolizing enzyme that participates in the degradation of certain C-glycosides by catalyzing the oxidation of the hydroxyl group at the C3 position of the sugar moiety. Shows oxidase activity toward C-glycosides such as isoorientin and mangiferin but cannot use carminic acid, puerarin, orientin or aloesin. Shows weak activity (100 to 1000-fold lower) with O-glycosides. Probably plays a crucial role in the metabolism of C-glycosides in nature. The protein is C-glycoside 3-oxidase of Microbacterium trichothecenolyticum (Aureobacterium trichothecenolyticum).